The following is a 46-amino-acid chain: Escargot/snail protein homolog (46 aa).

C2H2-type zinc fingers lie at residues 1 to 4, 9 to 30, and 36 to 46; these read HIAH, CKCP…IRTH, and SVCQHCNRAFA.

Belongs to the snail C2H2-type zinc-finger protein family.

The protein localises to the nucleus. The polypeptide is Escargot/snail protein homolog (Lithobius forficatus (Centipede)).